A 688-amino-acid polypeptide reads, in one-letter code: Glycine--tRNA ligase beta subunit (688 aa).

It belongs to the class-II aminoacyl-tRNA synthetase family. In terms of assembly, tetramer of two alpha and two beta subunits.

It is found in the cytoplasm. The enzyme catalyses tRNA(Gly) + glycine + ATP = glycyl-tRNA(Gly) + AMP + diphosphate. This Actinobacillus pleuropneumoniae serotype 7 (strain AP76) protein is Glycine--tRNA ligase beta subunit.